The sequence spans 89 residues: Small ribosomal subunit protein uS17 (89 aa).

Belongs to the universal ribosomal protein uS17 family. In terms of assembly, part of the 30S ribosomal subunit.

Its function is as follows. One of the primary rRNA binding proteins, it binds specifically to the 5'-end of 16S ribosomal RNA. This is Small ribosomal subunit protein uS17 from Novosphingobium aromaticivorans (strain ATCC 700278 / DSM 12444 / CCUG 56034 / CIP 105152 / NBRC 16084 / F199).